Here is a 644-residue protein sequence, read N- to C-terminus: 1-deoxy-D-xylulose-5-phosphate synthase (644 aa).

Residues histidine 72 and 113-115 each bind thiamine diphosphate; that span reads GHA. Aspartate 144 is a Mg(2+) binding site. Residues 145–146, asparagine 174, tyrosine 287, and glutamate 370 each bind thiamine diphosphate; that span reads GA. Mg(2+) is bound at residue asparagine 174.

It belongs to the transketolase family. DXPS subfamily. As to quaternary structure, homodimer. Requires Mg(2+) as cofactor. The cofactor is thiamine diphosphate.

The catalysed reaction is D-glyceraldehyde 3-phosphate + pyruvate + H(+) = 1-deoxy-D-xylulose 5-phosphate + CO2. It participates in metabolic intermediate biosynthesis; 1-deoxy-D-xylulose 5-phosphate biosynthesis; 1-deoxy-D-xylulose 5-phosphate from D-glyceraldehyde 3-phosphate and pyruvate: step 1/1. Its function is as follows. Catalyzes the acyloin condensation reaction between C atoms 2 and 3 of pyruvate and glyceraldehyde 3-phosphate to yield 1-deoxy-D-xylulose-5-phosphate (DXP). The polypeptide is 1-deoxy-D-xylulose-5-phosphate synthase (Prochlorococcus marinus (strain MIT 9313)).